The following is a 533-amino-acid chain: Cytochrome P450 9e2 (533 aa).

Residue C475 coordinates heme.

This sequence belongs to the cytochrome P450 family. Heme serves as cofactor.

The protein resides in the endoplasmic reticulum membrane. It is found in the microsome membrane. The chain is Cytochrome P450 9e2 (CYP9E2) from Blattella germanica (German cockroach).